We begin with the raw amino-acid sequence, 276 residues long: Large ribosomal subunit protein uL2 (276 aa).

The disordered stretch occupies residues 223-276 (GVAMNPVDHPHGGGEGRGKGHHPTSPWGLPTKGYKTRRGKRPSDKFIVRRRNEA). 2 stretches are compositionally biased toward basic and acidic residues: residues 230-240 (DHPHGGGEGRG) and 263-276 (RPSDKFIVRRRNEA).

It belongs to the universal ribosomal protein uL2 family. Part of the 50S ribosomal subunit. Forms a bridge to the 30S subunit in the 70S ribosome.

Its function is as follows. One of the primary rRNA binding proteins. Required for association of the 30S and 50S subunits to form the 70S ribosome, for tRNA binding and peptide bond formation. It has been suggested to have peptidyltransferase activity; this is somewhat controversial. Makes several contacts with the 16S rRNA in the 70S ribosome. The polypeptide is Large ribosomal subunit protein uL2 (Thermotoga petrophila (strain ATCC BAA-488 / DSM 13995 / JCM 10881 / RKU-1)).